A 130-amino-acid polypeptide reads, in one-letter code: Small ribosomal subunit protein uS8 (130 aa).

The protein belongs to the universal ribosomal protein uS8 family.

In Paracentrotus lividus (Common sea urchin), this protein is Small ribosomal subunit protein uS8 (RPS15A).